The primary structure comprises 548 residues: Polynucleotide 5'-hydroxyl-kinase nol-9 (548 aa).

186-193 lines the ATP pocket; sequence GHKGAGKS.

Belongs to the Clp1 family. NOL9/GRC3 subfamily.

It is found in the nucleus. It localises to the nucleolus. Functionally, polynucleotide 5'-kinase involved in rRNA processing. This chain is Polynucleotide 5'-hydroxyl-kinase nol-9 (nol-9), found in Caenorhabditis briggsae.